An 838-amino-acid chain; its full sequence is Leucine--tRNA ligase (838 aa).

The 'HIGH' region motif lies at proline 36 to histidine 46. The 'KMSKS' region signature appears at lysine 611–serine 615. Position 614 (lysine 614) interacts with ATP.

The protein belongs to the class-I aminoacyl-tRNA synthetase family.

The protein localises to the cytoplasm. The catalysed reaction is tRNA(Leu) + L-leucine + ATP = L-leucyl-tRNA(Leu) + AMP + diphosphate. This chain is Leucine--tRNA ligase, found in Wolbachia sp. subsp. Drosophila simulans (strain wRi).